Consider the following 189-residue polypeptide: Putative manganese efflux pump MntP (189 aa).

The next 6 membrane-spanning stretches (helical) occupy residues 3-23, 41-61, 62-82, 104-124, 132-152, and 168-188; these read PVAT…AAIG, LIFG…GKAA, AQYV…VLGA, FWLL…VGAG, IYST…IGVM, and AGGI…LNIF.

The protein belongs to the MntP (TC 9.B.29) family.

It localises to the cell inner membrane. In terms of biological role, probably functions as a manganese efflux pump. The chain is Putative manganese efflux pump MntP from Paraburkholderia phytofirmans (strain DSM 17436 / LMG 22146 / PsJN) (Burkholderia phytofirmans).